The primary structure comprises 115 residues: Small ribosomal subunit protein uS13 (115 aa).

Residues 92–115 form a disordered region; sequence RRGLPVRGQNTKNNARTRKGSKRK. Over residues 106-115 the composition is skewed to basic residues; sequence ARTRKGSKRK.

It belongs to the universal ribosomal protein uS13 family. As to quaternary structure, part of the 30S ribosomal subunit. Forms a loose heterodimer with protein S19. Forms two bridges to the 50S subunit in the 70S ribosome.

Functionally, located at the top of the head of the 30S subunit, it contacts several helices of the 16S rRNA. In the 70S ribosome it contacts the 23S rRNA (bridge B1a) and protein L5 of the 50S subunit (bridge B1b), connecting the 2 subunits; these bridges are implicated in subunit movement. Contacts the tRNAs in the A and P-sites. This is Small ribosomal subunit protein uS13 from Lactobacillus gasseri (strain ATCC 33323 / DSM 20243 / BCRC 14619 / CIP 102991 / JCM 1131 / KCTC 3163 / NCIMB 11718 / NCTC 13722 / AM63).